The sequence spans 315 residues: Probable cell division protein WhiA (315 aa).

Positions 275 to 309 (TLKELGEMVSSGTVSKSGVNHRLRKIDEIADALRR) form a DNA-binding region, H-T-H motif.

This sequence belongs to the WhiA family.

Functionally, involved in cell division and chromosome segregation. The protein is Probable cell division protein WhiA of Lysinibacillus sphaericus (strain C3-41).